Consider the following 155-residue polypeptide: Small ribosomal subunit protein uS7c (155 aa).

It belongs to the universal ribosomal protein uS7 family. Part of the 30S ribosomal subunit.

Its subcellular location is the plastid. The protein resides in the chloroplast. Its function is as follows. One of the primary rRNA binding proteins, it binds directly to 16S rRNA where it nucleates assembly of the head domain of the 30S subunit. The protein is Small ribosomal subunit protein uS7c (rps7) of Lilium superbum (Turk's cap lily).